We begin with the raw amino-acid sequence, 81 residues long: ATP synthase subunit c (81 aa).

The next 2 membrane-spanning stretches (helical) occupy residues 7 to 27 and 57 to 77; these read AASVLAAALAVGLAAIGPGIG and LAFMEALTIYGLVVALVLLFA.

The protein belongs to the ATPase C chain family. As to quaternary structure, F-type ATPases have 2 components, F(1) - the catalytic core - and F(0) - the membrane proton channel. F(1) has five subunits: alpha(3), beta(3), gamma(1), delta(1), epsilon(1). F(0) has four main subunits: a(1), b(1), b'(1) and c(10-14). The alpha and beta chains form an alternating ring which encloses part of the gamma chain. F(1) is attached to F(0) by a central stalk formed by the gamma and epsilon chains, while a peripheral stalk is formed by the delta, b and b' chains.

Its subcellular location is the cellular thylakoid membrane. Its function is as follows. F(1)F(0) ATP synthase produces ATP from ADP in the presence of a proton or sodium gradient. F-type ATPases consist of two structural domains, F(1) containing the extramembraneous catalytic core and F(0) containing the membrane proton channel, linked together by a central stalk and a peripheral stalk. During catalysis, ATP synthesis in the catalytic domain of F(1) is coupled via a rotary mechanism of the central stalk subunits to proton translocation. In terms of biological role, key component of the F(0) channel; it plays a direct role in translocation across the membrane. A homomeric c-ring of between 10-14 subunits forms the central stalk rotor element with the F(1) delta and epsilon subunits. This is ATP synthase subunit c from Synechococcus elongatus (strain ATCC 33912 / PCC 7942 / FACHB-805) (Anacystis nidulans R2).